The chain runs to 655 residues: Probable replication factor A 73 kDa subunit (655 aa).

Residues 195-217 (NRAAAPEATRARAVPPPARRTAS) are disordered. Residues 196 to 207 (RAAAPEATRARA) show a composition bias toward low complexity. A DNA-binding region (OB) is located at residues 236–326 (FKIHGMVSRK…TLRSDSIIEA (91 aa)). Residues 518-539 (CASEGCQKKLVGENGDYRCEKC) form a C4-type zinc finger.

This sequence belongs to the replication factor A protein 1 family. Component of the heterotrimeric canonical replication protein A complex (RPA).

It is found in the nucleus. In terms of biological role, as part of the heterotrimeric replication protein A complex (RPA/RP-A), binds and stabilizes single-stranded DNA intermediates, that form during DNA replication or upon DNA stress. It prevents their reannealing and in parallel, recruits and activates different proteins and complexes involved in DNA metabolism. Thereby, it plays an essential role both in DNA replication and the cellular response to DNA damage. The chain is Probable replication factor A 73 kDa subunit from Caenorhabditis elegans.